The sequence spans 115 residues: Large ribosomal subunit protein P2 (115 aa).

Residue Met-1 is modified to N-acetylmethionine. Residues Ser-17 and Ser-19 each carry the phosphoserine modification. The residue at position 21 (Lys-21) is an N6-acetyllysine; alternate. Position 21 is an N6-succinyllysine; alternate (Lys-21). Residues 76–90 (APGSAAPAAGSAPAA) show a composition bias toward low complexity. Positions 76–115 (APGSAAPAAGSAPAAAEERKEEKKEESEESDDDMGFGLFD) are disordered. 2 positions are modified to phosphoserine: Ser-79 and Ser-86. Basic and acidic residues predominate over residues 91-101 (AEERKEEKKEE). Phosphoserine occurs at positions 102 and 105.

The protein belongs to the eukaryotic ribosomal protein P1/P2 family. As to quaternary structure, heterodimer with RPLP1 at the lateral ribosomal stalk of the large ribosomal subunit.

Its function is as follows. Plays an important role in the elongation step of protein synthesis. The protein is Large ribosomal subunit protein P2 (RPLP2) of Equus caballus (Horse).